Reading from the N-terminus, the 758-residue chain is Ribosomal RNA processing protein 1 homolog B (758 aa).

Residue S245 is modified to Phosphoserine. The segment covering 259-272 (AVSKKKTALGKNHS) has biased composition (basic residues). The tract at residues 259 to 285 (AVSKKKTALGKNHSRKDGLSDERGRDD) is disordered. Basic and acidic residues predominate over residues 273 to 285 (RKDGLSDERGRDD). Phosphoserine occurs at positions 350, 392, 394, and 395. The tract at residues 381–598 (GSRVFCVEEE…KTASLKKRKK (218 aa)) is disordered. Residues 397-408 (QKRRRKKKKKHH) are compositionally biased toward basic residues. A compositionally biased stretch (low complexity) spans 447-457 (GAEATSSTGEE). Residues S452 and S458 each carry the phosphoserine modification. Residues 469-481 (HNKRKRPRKKSPR) are compositionally biased toward basic residues. Low complexity predominate over residues 498–513 (SQSGPSGSHPQGPRGS). A Phosphoserine modification is found at S513. Over residues 566 to 575 (QRRRLQKKKA) the composition is skewed to basic residues. Residue S579 is modified to Phosphoserine. K652 is subject to N6-acetyllysine. Residues 660–681 (KSSTATHPPGPAVQLNKTPSSS) form a disordered region. Phosphoserine occurs at positions 702 and 706. Residues 707-758 (PTGPSRVAFDPEQKPLHGVLKTPTSSPASSPLVAKKPLTTTPRRRPRAMDFF) are disordered. A Citrulline modification is found at R712. At T728 the chain carries Phosphothreonine. Phosphoserine is present on residues S732, S735, and S736.

The protein belongs to the RRP1 family. Interacts with the transcriptional activator E2F1. Interacts with serine/threonine-protein phosphatase PP1 subunits PPP1CB and PPP1CC but not with PPP1CA. Interacts with 60S ribosomal proteins RPL5 and RPL27, ribosomal processing protein RRP1/NNP1 and other nucleolar proteins including NOP2/NOL1 and FBL. Also interacts with nucleolar protein NPM1/B23. Interacts with splicing factor SRSF1 and with LUC7L3/CROP. Interacts with GTPase activator SIPA1. Interacts with CBX5/HP1alpha, H1-10, NCL, PARP1, TRIM28 and YBX3. In terms of assembly, (Microbial infection) Interacts with influenza A virus nucleoprotein NP and with RNA-directed RNA polymerase subunits PB1 and PB2. In terms of processing, citrullinated by PADI4.

The protein localises to the nucleus. It localises to the nucleolus. The protein resides in the nucleoplasm. Its subcellular location is the chromosome. In terms of biological role, positively regulates DNA damage-induced apoptosis by acting as a transcriptional coactivator of proapoptotic target genes of the transcriptional activator E2F1. Likely to play a role in ribosome biogenesis by targeting serine/threonine protein phosphatase PP1 to the nucleolus. Involved in regulation of mRNA splicing. Inhibits SIPA1 GTPase activity. Involved in regulating expression of extracellular matrix genes. Associates with chromatin and may play a role in modulating chromatin structure. Its function is as follows. (Microbial infection) Following influenza A virus (IAV) infection, promotes viral mRNA transcription by facilitating the binding of IAV RNA-directed RNA polymerase to capped mRNA. The chain is Ribosomal RNA processing protein 1 homolog B (RRP1B) from Homo sapiens (Human).